The chain runs to 411 residues: LL-diaminopimelate aminotransferase (411 aa).

Substrate contacts are provided by Tyr-16 and Gly-43. Pyridoxal 5'-phosphate is bound by residues Tyr-73, 109–110 (AK), Tyr-133, Asn-188, Tyr-219, and 247–249 (SYS). 3 residues coordinate substrate: Lys-110, Tyr-133, and Asn-188. Lys-250 bears the N6-(pyridoxal phosphate)lysine mark. Residues Arg-258 and Asn-293 each contribute to the pyridoxal 5'-phosphate site. 2 residues coordinate substrate: Asn-293 and Arg-389.

Belongs to the class-I pyridoxal-phosphate-dependent aminotransferase family. LL-diaminopimelate aminotransferase subfamily. In terms of assembly, homodimer. It depends on pyridoxal 5'-phosphate as a cofactor.

The enzyme catalyses (2S,6S)-2,6-diaminopimelate + 2-oxoglutarate = (S)-2,3,4,5-tetrahydrodipicolinate + L-glutamate + H2O + H(+). Its pathway is amino-acid biosynthesis; L-lysine biosynthesis via DAP pathway; LL-2,6-diaminopimelate from (S)-tetrahydrodipicolinate (aminotransferase route): step 1/1. Involved in the synthesis of meso-diaminopimelate (m-DAP or DL-DAP), required for both lysine and peptidoglycan biosynthesis. Catalyzes the direct conversion of tetrahydrodipicolinate to LL-diaminopimelate. This is LL-diaminopimelate aminotransferase from Methanosphaera stadtmanae (strain ATCC 43021 / DSM 3091 / JCM 11832 / MCB-3).